A 145-amino-acid chain; its full sequence is MRLSSFIVVGAAVVNLLTSGSVVVAAFPRVSDVSAMAIAPHRMDQGATNGGKRLLRYHSNNNRGGDEDIAEERGIFDFKNLEMLTNLARLNKANNLDSRLDDFFQALIKAKVNPTNIHHTRLDQDDYLELRQLFRTWYTFYHRAS.

The first 21 residues, 1 to 21 (MRLSSFIVVGAAVVNLLTSGS), serve as a signal peptide directing secretion. The RxLR-dEER signature appears at 53 to 73 (RLLRYHSNNNRGGDEDIAEER).

It belongs to the RxLR effector family.

It localises to the secreted. It is found in the host cell. In terms of biological role, secreted effector that impairs both plant effector-triggered immunity and pathogen-associated molecular patterns (PAMP)-triggered immunity (PTI). Suppresses plant cell death as a part of the plant defense responses. Facilitates plant infection by altering the auxin content at the roots penetration points of the of the pathogen. In Phytophthora nicotianae (Potato buckeye rot agent), this protein is Secreted RxLR effector protein PSE1.